The sequence spans 314 residues: Endolytic peptidoglycan transglycosylase RlpA (314 aa).

A signal peptide spans 1–19; it reads MGWALKKVCFLGVIFLISA. Cys20 carries N-palmitoyl cysteine lipidation. Cys20 carries S-diacylglycerol cysteine lipidation. One can recognise an SPOR domain in the interval 241 to 314; sequence SVSGGKFSLQ…YNQNAVLTRE (74 aa).

Belongs to the RlpA family.

It localises to the cell membrane. Functionally, lytic transglycosylase with a strong preference for naked glycan strands that lack stem peptides. The sequence is that of Endolytic peptidoglycan transglycosylase RlpA from Helicobacter pylori (strain J99 / ATCC 700824) (Campylobacter pylori J99).